Here is a 304-residue protein sequence, read N- to C-terminus: Aspartate carbamoyltransferase catalytic subunit (304 aa).

2 residues coordinate carbamoyl phosphate: Arg-57 and Thr-58. Lys-86 contributes to the L-aspartate binding site. Arg-107, His-135, and Gln-138 together coordinate carbamoyl phosphate. Residues Arg-168 and Arg-229 each coordinate L-aspartate. 2 residues coordinate carbamoyl phosphate: Leu-266 and Pro-267.

Belongs to the aspartate/ornithine carbamoyltransferase superfamily. ATCase family. In terms of assembly, heterooligomer of catalytic and regulatory chains.

It catalyses the reaction carbamoyl phosphate + L-aspartate = N-carbamoyl-L-aspartate + phosphate + H(+). Its pathway is pyrimidine metabolism; UMP biosynthesis via de novo pathway; (S)-dihydroorotate from bicarbonate: step 2/3. Its function is as follows. Catalyzes the condensation of carbamoyl phosphate and aspartate to form carbamoyl aspartate and inorganic phosphate, the committed step in the de novo pyrimidine nucleotide biosynthesis pathway. This chain is Aspartate carbamoyltransferase catalytic subunit, found in Methanosphaera stadtmanae (strain ATCC 43021 / DSM 3091 / JCM 11832 / MCB-3).